A 152-amino-acid polypeptide reads, in one-letter code: Ribosomal RNA large subunit methyltransferase H (152 aa).

Residues Leu-68, Gly-100, and 119 to 124 (LGVMTW) each bind S-adenosyl-L-methionine.

The protein belongs to the RNA methyltransferase RlmH family. In terms of assembly, homodimer.

Its subcellular location is the cytoplasm. The enzyme catalyses pseudouridine(1915) in 23S rRNA + S-adenosyl-L-methionine = N(3)-methylpseudouridine(1915) in 23S rRNA + S-adenosyl-L-homocysteine + H(+). Specifically methylates the pseudouridine at position 1915 (m3Psi1915) in 23S rRNA. This chain is Ribosomal RNA large subunit methyltransferase H, found in Rhodospirillum rubrum (strain ATCC 11170 / ATH 1.1.1 / DSM 467 / LMG 4362 / NCIMB 8255 / S1).